The following is a 124-amino-acid chain: Prefoldin subunit beta (124 aa).

The protein belongs to the prefoldin subunit beta family. As to quaternary structure, heterohexamer of two alpha and four beta subunits.

It is found in the cytoplasm. Functionally, molecular chaperone capable of stabilizing a range of proteins. Seems to fulfill an ATP-independent, HSP70-like function in archaeal de novo protein folding. This is Prefoldin subunit beta (pfdB) from Thermoplasma acidophilum (strain ATCC 25905 / DSM 1728 / JCM 9062 / NBRC 15155 / AMRC-C165).